Consider the following 312-residue polypeptide: DNA-directed RNA polymerase subunit alpha (312 aa).

Residues 1-229 are alpha N-terminal domain (alpha-NTD); it reads MLQYQIDRIE…ELFQPLATVT (229 aa). Residues 236–312 form an alpha C-terminal domain (alpha-CTD) region; the sequence is IEPEPSAEAQ…ISIPQSRTSV (77 aa).

The protein belongs to the RNA polymerase alpha chain family. As to quaternary structure, in cyanobacteria the RNAP catalytic core is composed of 2 alpha, 1 beta, 1 beta', 1 gamma and 1 omega subunit. When a sigma factor is associated with the core the holoenzyme is formed, which can initiate transcription.

It carries out the reaction RNA(n) + a ribonucleoside 5'-triphosphate = RNA(n+1) + diphosphate. Functionally, DNA-dependent RNA polymerase catalyzes the transcription of DNA into RNA using the four ribonucleoside triphosphates as substrates. In Synechococcus sp. (strain CC9311), this protein is DNA-directed RNA polymerase subunit alpha.